The primary structure comprises 116 residues: ATP-dependent Clp protease adapter protein ClpS (116 aa).

Residues 1 to 11 show a composition bias toward polar residues; the sequence is MRRINTIMQGK. Residues 1–23 are disordered; that stretch reads MRRINTIMQGKTNGGNGPESGTV.

This sequence belongs to the ClpS family. In terms of assembly, binds to the N-terminal domain of the chaperone ClpA.

Functionally, involved in the modulation of the specificity of the ClpAP-mediated ATP-dependent protein degradation. This Brucella abortus (strain S19) protein is ATP-dependent Clp protease adapter protein ClpS.